Here is a 307-residue protein sequence, read N- to C-terminus: Ribosomal RNA small subunit methyltransferase H (307 aa).

S-adenosyl-L-methionine is bound by residues 33-35 (GGH), D52, L83, D97, and Q104.

It belongs to the methyltransferase superfamily. RsmH family.

It is found in the cytoplasm. It catalyses the reaction cytidine(1402) in 16S rRNA + S-adenosyl-L-methionine = N(4)-methylcytidine(1402) in 16S rRNA + S-adenosyl-L-homocysteine + H(+). Its function is as follows. Specifically methylates the N4 position of cytidine in position 1402 (C1402) of 16S rRNA. This chain is Ribosomal RNA small subunit methyltransferase H, found in Campylobacter fetus subsp. fetus (strain 82-40).